Here is a 682-residue protein sequence, read N- to C-terminus: Protein ACTIVITY OF BC1 COMPLEX KINASE 1, chloroplastic (682 aa).

A chloroplast-targeting transit peptide spans 1–79; that stretch reads MESIHCNSLL…NSTDASVMTT (79 aa). The Protein kinase domain occupies 236–567; it reads KISSQTIAAA…IQVLFKDGVF (332 aa). Residues 242-250 and K265 contribute to the ATP site; that span reads IAAASLGQV. Residue D400 is the Proton acceptor of the active site.

This sequence belongs to the protein kinase superfamily. ADCK protein kinase family. Interacts with ABC1K3 in plastoglobules (PG). Expressed in all tissues (e.g. especially in leaves) at all developmental stages from seed germination to flowering, except in the root tips.

The protein resides in the plastid. It localises to the chloroplast. Its subcellular location is the plastoglobule. The enzyme catalyses L-seryl-[protein] + ATP = O-phospho-L-seryl-[protein] + ADP + H(+). The catalysed reaction is L-threonyl-[protein] + ATP = O-phospho-L-threonyl-[protein] + ADP + H(+). Kinase that can phosphorylate the tocopherol cyclase VTE1, a key enzyme of tocopherol (vitamin E) metabolism and involved in the recycling of oxidated alpha-tocopherol quinone, possibly stabilizing it at plastoglobules. Also regulates plastoglobule protein composition. Prevents photodamage of chloroplasts under continuous red light, thus working in opposition to ABC1K3. Together with ABC1K1, contributes to plastoglobule (PG) function in prenyl-lipid metabolism, stress response, and thylakoid remodeling. Involved in chlorophyll degradation and in the maintenance of the number of chlorophyll-binding photosynthetic thylakoid membranes. Ensures photosynthetic electron transport by regulating the homeostasis of plastoquinone, beta-carotene and xanthophyll lutein, as well as membrane antioxidant tocopherol metabolism. Seems to affect specifically stability or turnover of D1 protein, product of psbA, one of the four core subunits of the photosystem II (PSII). Required for photooxidative stress responses, including the induction of oxidative stress response genes (e.g. FSD1, CSD1, CAT1, and UTG71C1), to prevent photosystem II core and chlorophyll degradations. This is Protein ACTIVITY OF BC1 COMPLEX KINASE 1, chloroplastic from Arabidopsis thaliana (Mouse-ear cress).